A 419-amino-acid chain; its full sequence is UPF0242 protein TC_0906 (419 aa).

The protein belongs to the UPF0242 family.

This Chlamydia muridarum (strain MoPn / Nigg) protein is UPF0242 protein TC_0906.